The primary structure comprises 406 residues: Luteothin monooxygenase (406 aa).

His98, Arg102, Arg296, Gly350, His353, and Cys355 together coordinate heme b.

It belongs to the cytochrome P450 family. In terms of assembly, monomer. Requires heme b as cofactor.

The catalysed reaction is luteothin + 4 reduced [2Fe-2S]-[ferredoxin] + 2 O2 + 4 H(+) = aureothin + 4 oxidized [2Fe-2S]-[ferredoxin] + 3 H2O. It participates in antibiotic biosynthesis. The protein operates within polyketide biosynthesis. Bifunctional cytochrome P450 protein involved in the biosynthesis of the antibiotic aureothin, a nitroaryl polyketide metabolite with antifungal, cytotoxic and insecticidal activities. Catalyzes the hydroxylation of luteothin (also called deoxyaureothin), leading to the formation of the intermediate (7R)-7-hydroxydeoxyaureothin, followed by the formation of the aureothin tetrahydrofuran ring, the final step in the biosynthesis of aureothin. In Streptomyces thioluteus, this protein is Luteothin monooxygenase.